The chain runs to 1037 residues: Presequence protease, mitochondrial (1037 aa).

Residues 1–15 constitute a mitochondrion transit peptide; it reads MWRCGGRQGLGVLRR. H104 provides a ligand contact to Zn(2+). E107 serves as the catalytic Proton acceptor. Positions 108 and 205 each coordinate Zn(2+). A disulfide bridge connects residues C119 and C556. The residue at position 759 (K759) is an N6-acetyllysine. Residue K770 is modified to N6-acetyllysine; alternate. K770 carries the N6-succinyllysine; alternate modification. The segment at 803-834 is disordered; the sequence is IGRSKKERRPVRPHTVEKPVPSSSGGDAHVPH. Residues 804–814 show a composition bias toward basic residues; that stretch reads GRSKKERRPVR. K849 carries the post-translational modification N6-succinyllysine. An N6-acetyllysine modification is found at K884. K946 is subject to N6-succinyllysine.

It belongs to the peptidase M16 family. PreP subfamily. As to quaternary structure, monomer and homodimer; homodimerization is induced by binding of the substrate. Requires Zn(2+) as cofactor. Post-translationally, a disulfide bond locks the enzyme in the closed conformation preventing substrate entry into the catalytic chamber.

It localises to the mitochondrion matrix. Mainly exists in a closed and catalytically competent conformation but a closed-to-open switch allows substrate entry into the catalytic chamber. Substrate binding induces closure and dimerization. A disulfide bond may lock the enzyme in a closed conformation preventing substrate entry into the catalytic chamber, participating in redox regulation of the enzyme. Inhibited by metal-chelating agents. Inhibited by nickel and zinc excess, and slightly activated by manganese. In terms of biological role, metalloendopeptidase of the mitochondrial matrix that functions in peptide cleavage and degradation rather than in protein processing. Has an ATP-independent activity. Specifically cleaves peptides in the range of 5 to 65 residues. Shows a preference for cleavage after small polar residues and before basic residues, but without any positional preference. Degrades the transit peptides of mitochondrial proteins after their cleavage. Also degrades other unstructured peptides. It is also able to degrade amyloid-beta protein 40, one of the peptides produced by APP processing, when it accumulates in mitochondrion. It is a highly efficient protease, at least toward amyloid-beta protein 40. Cleaves that peptide at a specific position and is probably not processive, releasing digested peptides intermediates that can be further cleaved subsequently. It is also able to degrade amyloid-beta protein 42. The chain is Presequence protease, mitochondrial from Pongo abelii (Sumatran orangutan).